Here is a 343-residue protein sequence, read N- to C-terminus: Branched-chain-amino-acid aminotransferase (343 aa).

Lys-182 is modified (N6-(pyridoxal phosphate)lysine).

The protein belongs to the class-IV pyridoxal-phosphate-dependent aminotransferase family. Pyridoxal 5'-phosphate is required as a cofactor.

The catalysed reaction is L-leucine + 2-oxoglutarate = 4-methyl-2-oxopentanoate + L-glutamate. It catalyses the reaction L-isoleucine + 2-oxoglutarate = (S)-3-methyl-2-oxopentanoate + L-glutamate. The enzyme catalyses L-valine + 2-oxoglutarate = 3-methyl-2-oxobutanoate + L-glutamate. It participates in amino-acid biosynthesis; L-isoleucine biosynthesis; L-isoleucine from 2-oxobutanoate: step 4/4. It functions in the pathway amino-acid biosynthesis; L-leucine biosynthesis; L-leucine from 3-methyl-2-oxobutanoate: step 4/4. Its pathway is amino-acid biosynthesis; L-valine biosynthesis; L-valine from pyruvate: step 4/4. Acts on leucine, isoleucine and valine. This Haemophilus influenzae (strain ATCC 51907 / DSM 11121 / KW20 / Rd) protein is Branched-chain-amino-acid aminotransferase (ilvE).